The chain runs to 508 residues: Photosystem II CP47 reaction center protein (508 aa).

The next 6 helical transmembrane spans lie at 21 to 36 (SVHL…WAGS), 101 to 115 (IILS…IWHW), 140 to 156 (GIHL…FGAF), 203 to 218 (IAAG…FHLS), 237 to 252 (VLSS…AFVV), and 457 to 472 (TFAL…HGAR).

Belongs to the PsbB/PsbC family. PsbB subfamily. PSII is composed of 1 copy each of membrane proteins PsbA, PsbB, PsbC, PsbD, PsbE, PsbF, PsbH, PsbI, PsbJ, PsbK, PsbL, PsbM, PsbT, PsbX, PsbY, PsbZ, Psb30/Ycf12, at least 3 peripheral proteins of the oxygen-evolving complex and a large number of cofactors. It forms dimeric complexes. Requires Binds multiple chlorophylls. PSII binds additional chlorophylls, carotenoids and specific lipids. as cofactor.

It localises to the plastid. It is found in the chloroplast thylakoid membrane. Functionally, one of the components of the core complex of photosystem II (PSII). It binds chlorophyll and helps catalyze the primary light-induced photochemical processes of PSII. PSII is a light-driven water:plastoquinone oxidoreductase, using light energy to abstract electrons from H(2)O, generating O(2) and a proton gradient subsequently used for ATP formation. The sequence is that of Photosystem II CP47 reaction center protein from Adiantum capillus-veneris (Maidenhair fern).